Reading from the N-terminus, the 388-residue chain is Probable protein phosphatase 2C 43 (388 aa).

Residues 53-352 (EFSFAVVQAN…DDITVVVVFI (300 aa)) form the PPM-type phosphatase domain. Residues Asp84, Gly85, Asp284, and Asp343 each contribute to the Mn(2+) site.

It belongs to the PP2C family. The cofactor is Mg(2+). It depends on Mn(2+) as a cofactor.

It catalyses the reaction O-phospho-L-seryl-[protein] + H2O = L-seryl-[protein] + phosphate. It carries out the reaction O-phospho-L-threonyl-[protein] + H2O = L-threonyl-[protein] + phosphate. This is Probable protein phosphatase 2C 43 from Oryza sativa subsp. japonica (Rice).